The primary structure comprises 255 residues: Hydroxyacylglutathione hydrolase (255 aa).

Residues H56, H58, D60, H61, H114, D133, and H171 each coordinate Zn(2+).

The protein belongs to the metallo-beta-lactamase superfamily. Glyoxalase II family. As to quaternary structure, monomer. The cofactor is Zn(2+).

It carries out the reaction an S-(2-hydroxyacyl)glutathione + H2O = a 2-hydroxy carboxylate + glutathione + H(+). It participates in secondary metabolite metabolism; methylglyoxal degradation; (R)-lactate from methylglyoxal: step 2/2. Functionally, thiolesterase that catalyzes the hydrolysis of S-D-lactoyl-glutathione to form glutathione and D-lactic acid. The protein is Hydroxyacylglutathione hydrolase of Ruegeria pomeroyi (strain ATCC 700808 / DSM 15171 / DSS-3) (Silicibacter pomeroyi).